The following is a 260-amino-acid chain: Hydroxyacylglutathione hydrolase (260 aa).

Residues His-66, His-68, Asp-70, His-71, His-125, Asp-150, and His-188 each coordinate Zn(2+).

This sequence belongs to the metallo-beta-lactamase superfamily. Glyoxalase II family. Monomer. It depends on Zn(2+) as a cofactor.

It carries out the reaction an S-(2-hydroxyacyl)glutathione + H2O = a 2-hydroxy carboxylate + glutathione + H(+). The protein operates within secondary metabolite metabolism; methylglyoxal degradation; (R)-lactate from methylglyoxal: step 2/2. Thiolesterase that catalyzes the hydrolysis of S-D-lactoyl-glutathione to form glutathione and D-lactic acid. The polypeptide is Hydroxyacylglutathione hydrolase (Prochlorococcus marinus (strain MIT 9303)).